Reading from the N-terminus, the 259-residue chain is Deoxyribose-phosphate aldolase (259 aa).

Aspartate 102 serves as the catalytic Proton donor/acceptor. The Schiff-base intermediate with acetaldehyde role is filled by lysine 167. The Proton donor/acceptor role is filled by lysine 201.

This sequence belongs to the DeoC/FbaB aldolase family. DeoC type 2 subfamily.

It localises to the cytoplasm. The catalysed reaction is 2-deoxy-D-ribose 5-phosphate = D-glyceraldehyde 3-phosphate + acetaldehyde. It participates in carbohydrate degradation; 2-deoxy-D-ribose 1-phosphate degradation; D-glyceraldehyde 3-phosphate and acetaldehyde from 2-deoxy-alpha-D-ribose 1-phosphate: step 2/2. Its function is as follows. Catalyzes a reversible aldol reaction between acetaldehyde and D-glyceraldehyde 3-phosphate to generate 2-deoxy-D-ribose 5-phosphate. The chain is Deoxyribose-phosphate aldolase from Salmonella dublin (strain CT_02021853).